The sequence spans 360 residues: UDP-3-O-acylglucosamine N-acyltransferase (360 aa).

Catalysis depends on H256, which acts as the Proton acceptor. The disordered stretch occupies residues 341 to 360 (EGSGAETAARPDDDRDEGRG). Over residues 349–360 (ARPDDDRDEGRG) the composition is skewed to basic and acidic residues.

The protein belongs to the transferase hexapeptide repeat family. LpxD subfamily. Homotrimer.

It carries out the reaction a UDP-3-O-[(3R)-3-hydroxyacyl]-alpha-D-glucosamine + a (3R)-hydroxyacyl-[ACP] = a UDP-2-N,3-O-bis[(3R)-3-hydroxyacyl]-alpha-D-glucosamine + holo-[ACP] + H(+). It functions in the pathway bacterial outer membrane biogenesis; LPS lipid A biosynthesis. Functionally, catalyzes the N-acylation of UDP-3-O-acylglucosamine using 3-hydroxyacyl-ACP as the acyl donor. Is involved in the biosynthesis of lipid A, a phosphorylated glycolipid that anchors the lipopolysaccharide to the outer membrane of the cell. The chain is UDP-3-O-acylglucosamine N-acyltransferase from Rhodopseudomonas palustris (strain TIE-1).